A 273-amino-acid chain; its full sequence is Pantothenate synthetase (273 aa).

Residue 27-34 coordinates ATP; that stretch reads MGALHQGH. Catalysis depends on His34, which acts as the Proton donor. Gln58 contributes to the (R)-pantoate binding site. Gln58 lines the beta-alanine pocket. 144-147 provides a ligand contact to ATP; sequence GKKD. A (R)-pantoate-binding site is contributed by Gln150. ATP-binding positions include Val173 and 181-184; that span reads LSSR.

It belongs to the pantothenate synthetase family. In terms of assembly, homodimer.

It localises to the cytoplasm. It catalyses the reaction (R)-pantoate + beta-alanine + ATP = (R)-pantothenate + AMP + diphosphate + H(+). It functions in the pathway cofactor biosynthesis; (R)-pantothenate biosynthesis; (R)-pantothenate from (R)-pantoate and beta-alanine: step 1/1. Functionally, catalyzes the condensation of pantoate with beta-alanine in an ATP-dependent reaction via a pantoyl-adenylate intermediate. This is Pantothenate synthetase from Nitratiruptor sp. (strain SB155-2).